Here is a 337-residue protein sequence, read N- to C-terminus: Large ribosomal subunit protein uL3 (337 aa).

A disordered region spans residues methionine 1–serine 29.

The protein belongs to the universal ribosomal protein uL3 family. As to quaternary structure, part of the 50S ribosomal subunit. Forms a cluster with proteins L14 and L24e.

One of the primary rRNA binding proteins, it binds directly near the 3'-end of the 23S rRNA, where it nucleates assembly of the 50S subunit. The polypeptide is Large ribosomal subunit protein uL3 (Methanoregula boonei (strain DSM 21154 / JCM 14090 / 6A8)).